Reading from the N-terminus, the 287-residue chain is Large ribosomal subunit protein uL2 (287 aa).

The interval 221 to 287 (RGSVMNPCDH…SKRSRGGRDS (67 aa)) is disordered. Residues 258 to 287 (KTRKKNKPSNKLVVRRRRRVSKRSRGGRDS) show a composition bias toward basic residues.

This sequence belongs to the universal ribosomal protein uL2 family. In terms of assembly, part of the 50S ribosomal subunit. Forms a bridge to the 30S subunit in the 70S ribosome.

Its function is as follows. One of the primary rRNA binding proteins. Required for association of the 30S and 50S subunits to form the 70S ribosome, for tRNA binding and peptide bond formation. It has been suggested to have peptidyltransferase activity; this is somewhat controversial. Makes several contacts with the 16S rRNA in the 70S ribosome. The polypeptide is Large ribosomal subunit protein uL2 (Prochlorococcus marinus (strain AS9601)).